A 770-amino-acid chain; its full sequence is Multifunctional tryptophan biosynthesis protein (770 aa).

Residues 25-225 (NVILIDNYDS…LKLTAGTWEG (201 aa)) form the Glutamine amidotransferase type-1 domain. 76–78 (GPG) contributes to the L-glutamine binding site. The active-site Nucleophile; for GATase activity is the Cys-104. L-glutamine-binding positions include Gln-108 and 154–155 (SL). Catalysis depends on for GATase activity residues His-199 and Glu-201. Residues 228-251 (KHFGEQSSTTKATVPSNPPPKTDK) are disordered. Over residues 232-242 (EQSSTTKATVP) the composition is skewed to polar residues. An indole-3-glycerol phosphate synthase region spans residues 255–519 (ILERIYDHRR…DTATFIAELL (265 aa)). Positions 535–770 (LVKICGTRSE…RAFVQAVRGL (236 aa)) are N-(5'-phosphoribosyl)anthranilate isomerase.

The catalysed reaction is N-(5-phospho-beta-D-ribosyl)anthranilate = 1-(2-carboxyphenylamino)-1-deoxy-D-ribulose 5-phosphate. It carries out the reaction 1-(2-carboxyphenylamino)-1-deoxy-D-ribulose 5-phosphate + H(+) = (1S,2R)-1-C-(indol-3-yl)glycerol 3-phosphate + CO2 + H2O. The enzyme catalyses chorismate + L-glutamine = anthranilate + pyruvate + L-glutamate + H(+). It participates in amino-acid biosynthesis; L-tryptophan biosynthesis; L-tryptophan from chorismate: step 1/5. The protein operates within amino-acid biosynthesis; L-tryptophan biosynthesis; L-tryptophan from chorismate: step 3/5. It functions in the pathway amino-acid biosynthesis; L-tryptophan biosynthesis; L-tryptophan from chorismate: step 4/5. Its function is as follows. Trifunctional enzyme bearing the Gln amidotransferase (GATase) domain of anthranilate synthase, indole-glycerolphosphate synthase, and phosphoribosylanthranilate isomerase activities. In Aspergillus niger, this protein is Multifunctional tryptophan biosynthesis protein (trpC).